A 551-amino-acid chain; its full sequence is Hydroxylamine reductase (551 aa).

Residues cysteine 3, cysteine 6, cysteine 18, and cysteine 25 each contribute to the [2Fe-2S] cluster site. Histidine 249, glutamate 273, cysteine 317, cysteine 405, cysteine 433, cysteine 458, glutamate 492, and lysine 494 together coordinate hybrid [4Fe-2O-2S] cluster. Cysteine 405 carries the post-translational modification Cysteine persulfide.

Belongs to the HCP family. [2Fe-2S] cluster is required as a cofactor. The cofactor is hybrid [4Fe-2O-2S] cluster.

It localises to the cytoplasm. It catalyses the reaction A + NH4(+) + H2O = hydroxylamine + AH2 + H(+). Catalyzes the reduction of hydroxylamine to form NH(3) and H(2)O. The sequence is that of Hydroxylamine reductase from Edwardsiella ictaluri (strain 93-146).